The following is a 700-amino-acid chain: mRNA cap guanine-N(7) methyltransferase (700 aa).

Basic and acidic residues-rich tracts occupy residues 1–10 (MVYDPIRDCD) and 52–67 (EPPR…ESHR). Disordered stretches follow at residues 1–263 (MVYD…SVLR) and 277–392 (AHAN…ERNK). Residues 113–128 (RSPSMSLSPRSQNQSL) are compositionally biased toward polar residues. 2 stretches are compositionally biased toward low complexity: residues 129-144 (PYPS…SAHP) and 220-241 (PQPT…TPHH). The region spanning 429–700 (SPIIGLKKFN…LYMGFAFEKM (272 aa)) is the mRNA cap 0 methyltransferase domain. MRNA is bound at residue 438 to 439 (NN). K442, G461, D483, D512, Q538, and Y543 together coordinate S-adenosyl-L-methionine.

Belongs to the class I-like SAM-binding methyltransferase superfamily. mRNA cap 0 methyltransferase family.

The protein resides in the nucleus. The enzyme catalyses a 5'-end (5'-triphosphoguanosine)-ribonucleoside in mRNA + S-adenosyl-L-methionine = a 5'-end (N(7)-methyl 5'-triphosphoguanosine)-ribonucleoside in mRNA + S-adenosyl-L-homocysteine. In terms of biological role, responsible for methylating the 5'-cap structure of mRNAs. The protein is mRNA cap guanine-N(7) methyltransferase (ABD1) of Cryptococcus neoformans var. neoformans serotype D (strain B-3501A) (Filobasidiella neoformans).